Reading from the N-terminus, the 256-residue chain is Thiazole synthase (256 aa).

Lys95 serves as the catalytic Schiff-base intermediate with DXP. Residues Gly156, 182-183 (AG), and 204-205 (NT) contribute to the 1-deoxy-D-xylulose 5-phosphate site.

The protein belongs to the ThiG family. In terms of assembly, homotetramer. Forms heterodimers with either ThiH or ThiS.

It localises to the cytoplasm. It catalyses the reaction [ThiS sulfur-carrier protein]-C-terminal-Gly-aminoethanethioate + 2-iminoacetate + 1-deoxy-D-xylulose 5-phosphate = [ThiS sulfur-carrier protein]-C-terminal Gly-Gly + 2-[(2R,5Z)-2-carboxy-4-methylthiazol-5(2H)-ylidene]ethyl phosphate + 2 H2O + H(+). The protein operates within cofactor biosynthesis; thiamine diphosphate biosynthesis. Functionally, catalyzes the rearrangement of 1-deoxy-D-xylulose 5-phosphate (DXP) to produce the thiazole phosphate moiety of thiamine. Sulfur is provided by the thiocarboxylate moiety of the carrier protein ThiS. In vitro, sulfur can be provided by H(2)S. This is Thiazole synthase from Shigella boydii serotype 18 (strain CDC 3083-94 / BS512).